Reading from the N-terminus, the 174-residue chain is Adenine phosphoribosyltransferase (174 aa).

The protein belongs to the purine/pyrimidine phosphoribosyltransferase family. As to quaternary structure, homodimer.

The protein resides in the cytoplasm. The enzyme catalyses AMP + diphosphate = 5-phospho-alpha-D-ribose 1-diphosphate + adenine. It participates in purine metabolism; AMP biosynthesis via salvage pathway; AMP from adenine: step 1/1. In terms of biological role, catalyzes a salvage reaction resulting in the formation of AMP, that is energically less costly than de novo synthesis. This is Adenine phosphoribosyltransferase from Lachnoclostridium phytofermentans (strain ATCC 700394 / DSM 18823 / ISDg) (Clostridium phytofermentans).